The sequence spans 195 residues: Small ribosomal subunit protein uS10c (195 aa).

A chloroplast-targeting transit peptide spans 1–59 (MATSSISAALLSPLTLRNASSSSTKQDFSTLSSLNLRRTLTPTLQSGHTLSNSSNFATF).

It belongs to the universal ribosomal protein uS10 family. In terms of assembly, component of the chloroplast small ribosomal subunit (SSU). Mature 70S chloroplast ribosomes of higher plants consist of a small (30S) and a large (50S) subunit. The 30S small subunit contains 1 molecule of ribosomal RNA (16S rRNA) and 24 different proteins. The 50S large subunit contains 3 rRNA molecules (23S, 5S and 4.5S rRNA) and 33 different proteins.

The protein resides in the plastid. Its subcellular location is the chloroplast. Its function is as follows. Component of the chloroplast ribosome (chloro-ribosome), a dedicated translation machinery responsible for the synthesis of chloroplast genome-encoded proteins, including proteins of the transcription and translation machinery and components of the photosynthetic apparatus. The polypeptide is Small ribosomal subunit protein uS10c (RPS10) (Spinacia oleracea (Spinach)).